The primary structure comprises 103 residues: uncharacterized protein (103 aa).

Positions 1 to 103 (MAGARRRARC…WRGGSCTSQR (103 aa)) are disordered. Residues 35–44 (GSGQPRWWPW) show a composition bias toward low complexity. Basic residues-rich tracts occupy residues 55–65 (RRPGPGRRARS) and 74–84 (RPPHSRTRARR).

Belongs to the epstein-barr virus RPMS1 family.

This is an uncharacterized protein from Homo sapiens (Human).